Reading from the N-terminus, the 164-residue chain is Interferon gamma (164 aa).

Residues 1–19 form the signal peptide; it reads MTCQTYNLFVLSVIMIYYG. N-linked (GlcNAc...) asparagine glycans are attached at residues N42 and N61.

This sequence belongs to the type II (or gamma) interferon family. As to quaternary structure, homodimer.

The protein localises to the secreted. In terms of biological role, produced by lymphocytes activated by specific antigens or mitogens. IFN-gamma, in addition to having antiviral activity, has important immunoregulatory functions. It is a potent activator of macrophages, it has antiproliferative effects on transformed cells and it can potentiate the antiviral and antitumor effects of the type I interferons. The chain is Interferon gamma (IFNG) from Coturnix japonica (Japanese quail).